We begin with the raw amino-acid sequence, 125 residues long: Fluoride-specific ion channel FluC (125 aa).

4 consecutive transmembrane segments (helical) span residues 6–26 (VLVMVGGALGSLARYWVGLGI), 35–55 (FLFGTLLVNLVGSFMLGGLFA), 66–86 (LLLLAGTGFCGGFTTFSALSI), and 100–120 (AMGYLLGSLLGGLAAGWAGYL). Residues glycine 76 and threonine 79 each coordinate Na(+).

This sequence belongs to the fluoride channel Fluc/FEX (TC 1.A.43) family.

It localises to the cell inner membrane. It catalyses the reaction fluoride(in) = fluoride(out). Its activity is regulated as follows. Na(+) is not transported, but it plays an essential structural role and its presence is essential for fluoride channel function. Its function is as follows. Fluoride-specific ion channel. Important for reducing fluoride concentration in the cell, thus reducing its toxicity. The chain is Fluoride-specific ion channel FluC from Gloeobacter violaceus (strain ATCC 29082 / PCC 7421).